Reading from the N-terminus, the 412-residue chain is Subtilisin-like protease 6 (412 aa).

The first 20 residues, 1 to 20 (MGFITKAIPIVLAALSTVNG), serve as a signal peptide directing secretion. Positions 21–127 (ARILEAGPHA…VRATTNGTNL (107 aa)) are excised as a propeptide. The region spanning 36 to 120 (KYIVVMKKDV…FIEPDFVVRA (85 aa)) is the Inhibitor I9 domain. Residues 135 to 412 (SWGLARVSTR…SKLIYNGSGK (278 aa)) form the Peptidase S8 domain. Residues D167 and H198 each act as charge relay system in the active site. N252, N264, and N325 each carry an N-linked (GlcNAc...) asparagine glycan. S358 (charge relay system) is an active-site residue. N-linked (GlcNAc...) asparagine glycosylation occurs at N408.

This sequence belongs to the peptidase S8 family.

It is found in the secreted. Its function is as follows. Secreted subtilisin-like serine protease with keratinolytic activity that contributes to pathogenicity. The sequence is that of Subtilisin-like protease 6 (SUB6) from Trichophyton verrucosum (strain HKI 0517).